The primary structure comprises 402 residues: Serine/threonine-protein phosphatase 4 regulatory subunit 2 (402 aa).

Residues 258–402 (NEDQDDENTG…FSKRNKASES (145 aa)) form a disordered region. A compositionally biased stretch (polar residues) spans 266 to 277 (TGFSNQVINDNN). Positions 278–319 (DSQEDDDEDSDYIEEDEGDEDEDDDDDEEEEEEEDGDEDEDE) are enriched in acidic residues. Positions 320 to 337 (DKHFDIKVEEEAVKEDAN) are enriched in basic and acidic residues. Positions 345–358 (NVSNNSDDSSLQND) are enriched in low complexity.

It belongs to the PPP4R2 family. Regulatory subunit (R2) of the histone H2A phosphatase complex (HTP-C) consisting of PPH3, PSY2 and PSY4.

It localises to the nucleus. Functionally, regulatory subunit of the histone H2A phosphatase complex, which dephosphorylates H2AS128ph (gamma-H2A) that has been displaced from sites of DNA lesions in the double-stranded DNA break repair process. Dephosphorylation is necessary for efficient recovery from the DNA damage checkpoint. In Candida glabrata (strain ATCC 2001 / BCRC 20586 / JCM 3761 / NBRC 0622 / NRRL Y-65 / CBS 138) (Yeast), this protein is Serine/threonine-protein phosphatase 4 regulatory subunit 2 (PSY4).